Reading from the N-terminus, the 181-residue chain is ADP-ribosylation factor 1 (181 aa).

Gly2 is lipidated: N-myristoyl glycine. GTP is bound by residues 24 to 31 (GLDAAGKT), 67 to 71 (DVGGQ), and 126 to 129 (NKQD).

Belongs to the small GTPase superfamily. Arf family. As to expression, seedling shoots.

Its subcellular location is the golgi apparatus. The catalysed reaction is GTP + H2O = GDP + phosphate + H(+). Its function is as follows. GTP-binding protein involved in protein trafficking; may modulate vesicle budding and uncoating within the Golgi apparatus. The polypeptide is ADP-ribosylation factor 1 (Oryza sativa subsp. japonica (Rice)).